Reading from the N-terminus, the 495-residue chain is Ribosome biogenesis protein YTM1 (495 aa).

A ubiquitin-like (UBL) domain region spans residues 15–97 (VKVIFTTTEP…ETTLTLQYVR (83 aa)). 7 WD repeats span residues 129-168 (WSSA…IATS), 175-213 (GHTA…HFTG), 223-262 (GHTG…APEP), 264-295 (ASLL…LWSI), 296-337 (HTAP…STLT), 386-426 (GHAN…PATK), and 458-495 (GDGC…TEQK).

Belongs to the WD repeat WDR12/YTM1 family. In terms of assembly, component of the NOP7 complex, composed of ERB1, NOP7 and YTM1. The complex is held together by ERB1, which interacts with NOP7 via its N-terminal domain and with YTM1 via a high-affinity interaction between the seven-bladed beta-propeller domains of the 2 proteins. The NOP7 complex associates with the 66S pre-ribosome. Interacts (via UBL domain) with MDN1 (via VWFA/MIDAS domain).

The protein resides in the nucleus. The protein localises to the nucleolus. It is found in the nucleoplasm. Functionally, component of the NOP7 complex, which is required for maturation of the 25S and 5.8S ribosomal RNAs and formation of the 60S ribosome. This is Ribosome biogenesis protein YTM1 from Chaetomium thermophilum (strain DSM 1495 / CBS 144.50 / IMI 039719) (Thermochaetoides thermophila).